Reading from the N-terminus, the 740-residue chain is DNA polymerase iota (740 aa).

The segment at 1–21 (MEKLGVEPEEEGGGDDDEEDA) is disordered. Acidic residues predominate over residues 7 to 21 (EPEEEGGGDDDEEDA). The 214-residue stretch at 55–268 (IVHVDLDCFY…NHIKEIPGIG (214 aa)) folds into the UmuC domain. Mg(2+) contacts are provided by Asp-59 and Leu-60. Asp-59 and Leu-60 together coordinate Mn(2+). A 2'-deoxyribonucleoside 5'-triphosphate-binding residues include Tyr-64 and Arg-96. Position 151 (Asp-151) interacts with Mg(2+). Mn(2+) is bound at residue Asp-151. Glu-152 acts as the Proton acceptor in catalysis. DNA-binding regions lie at residues 249–314 (ESCQ…FGED) and 325–439 (QSFS…CNLK). The Ubiquitin-binding 1 (UBM1) signature appears at 527-544 (VDQEVFKQLPVDIQEEIL). Disordered regions lie at residues 581 to 615 (PINP…SSYM) and 671 to 704 (NHTT…KITF). Residues 605 to 615 (SGFNSSSSSYM) show a composition bias toward low complexity. Residues 672–702 (HTTDSHKQTVATDSHEGLTENREPDSVDEKI) are compositionally biased toward basic and acidic residues. The Ubiquitin-binding 2 (UBM2) motif lies at 708 to 725 (IDPQVFYELPEAVQKELL).

Belongs to the DNA polymerase type-Y family. In terms of assembly, interacts with POLH. Interacts with REV1. Interacts with ubiquitin. Requires Mg(2+) as cofactor. It depends on Mn(2+) as a cofactor. In terms of processing, monoubiquitinated. Protein monoubiquitination prevents POLI binding to ubiquitin via the ubiquitin-binding motif 1 and ubiquitin-binding motif 2. In terms of tissue distribution, ubiquitous. Highly expressed in testis.

It localises to the nucleus. The enzyme catalyses DNA(n) + a 2'-deoxyribonucleoside 5'-triphosphate = DNA(n+1) + diphosphate. In terms of biological role, error-prone DNA polymerase specifically involved in DNA repair. Plays an important role in translesion synthesis, where the normal high-fidelity DNA polymerases cannot proceed and DNA synthesis stalls. Favors Hoogsteen base-pairing in the active site. Inserts the correct base with high-fidelity opposite an adenosine template. Exhibits low fidelity and efficiency opposite a thymidine template, where it will preferentially insert guanosine. May play a role in hypermutation of immunoglobulin genes. Forms a Schiff base with 5'-deoxyribose phosphate at abasic sites, but may not have lyase activity. The polypeptide is DNA polymerase iota (POLI) (Homo sapiens (Human)).